A 210-amino-acid polypeptide reads, in one-letter code: Dephospho-CoA kinase (210 aa).

The DPCK domain maps to valine 15–lysine 210. Glycine 23 to alanine 28 provides a ligand contact to ATP.

It belongs to the CoaE family.

The protein resides in the cytoplasm. The catalysed reaction is 3'-dephospho-CoA + ATP = ADP + CoA + H(+). The protein operates within cofactor biosynthesis; coenzyme A biosynthesis; CoA from (R)-pantothenate: step 5/5. Catalyzes the phosphorylation of the 3'-hydroxyl group of dephosphocoenzyme A to form coenzyme A. This is Dephospho-CoA kinase from Pseudoalteromonas translucida (strain TAC 125).